A 360-amino-acid polypeptide reads, in one-letter code: Phospho-N-acetylmuramoyl-pentapeptide-transferase (360 aa).

A run of 10 helical transmembrane segments spans residues 27-47 (IVGLLTALIIALWMGPHLIAW), 71-91 (TPTMGGIMILFSIAVSTLLWA), 97-117 (YVWCVLLVLIGYGIIGFIDDY), 132-152 (WKYFWQSVLALAVAFSMYAIG), 168-188 (VMPQLGMLYILLAYFVIVGTS), 199-219 (GLAIMPTVFVAAGFALVAWAT), 236-256 (AGELVIVCTAIVGAGLGFLWF), 263-283 (VFMGDVGSLALGGALGTIAVL), 288-308 (FLLVIMGGVFVVETLSVILQV), and 338-358 (VIVRFWIISLMLVLIGLATLK).

This sequence belongs to the glycosyltransferase 4 family. MraY subfamily. The cofactor is Mg(2+).

The protein localises to the cell inner membrane. The catalysed reaction is UDP-N-acetyl-alpha-D-muramoyl-L-alanyl-gamma-D-glutamyl-meso-2,6-diaminopimeloyl-D-alanyl-D-alanine + di-trans,octa-cis-undecaprenyl phosphate = di-trans,octa-cis-undecaprenyl diphospho-N-acetyl-alpha-D-muramoyl-L-alanyl-D-glutamyl-meso-2,6-diaminopimeloyl-D-alanyl-D-alanine + UMP. The protein operates within cell wall biogenesis; peptidoglycan biosynthesis. Functionally, catalyzes the initial step of the lipid cycle reactions in the biosynthesis of the cell wall peptidoglycan: transfers peptidoglycan precursor phospho-MurNAc-pentapeptide from UDP-MurNAc-pentapeptide onto the lipid carrier undecaprenyl phosphate, yielding undecaprenyl-pyrophosphoryl-MurNAc-pentapeptide, known as lipid I. The chain is Phospho-N-acetylmuramoyl-pentapeptide-transferase from Proteus mirabilis (strain HI4320).